The chain runs to 383 residues: Queuine tRNA-ribosyltransferase (383 aa).

Residue Asp90 is the Proton acceptor of the active site. Substrate is bound by residues 90-94 (DSGGF), Asp144, Gln193, and Gly227. Residues 258–264 (GVGTPED) are RNA binding. Asp277 acts as the Nucleophile in catalysis. Residues 282–286 (TRNAR) form an RNA binding; important for wobble base 34 recognition region. Cys315, Cys317, Cys320, and His346 together coordinate Zn(2+).

It belongs to the queuine tRNA-ribosyltransferase family. Homodimer. Within each dimer, one monomer is responsible for RNA recognition and catalysis, while the other monomer binds to the replacement base PreQ1. Requires Zn(2+) as cofactor.

The enzyme catalyses 7-aminomethyl-7-carbaguanine + guanosine(34) in tRNA = 7-aminomethyl-7-carbaguanosine(34) in tRNA + guanine. The protein operates within tRNA modification; tRNA-queuosine biosynthesis. In terms of biological role, catalyzes the base-exchange of a guanine (G) residue with the queuine precursor 7-aminomethyl-7-deazaguanine (PreQ1) at position 34 (anticodon wobble position) in tRNAs with GU(N) anticodons (tRNA-Asp, -Asn, -His and -Tyr). Catalysis occurs through a double-displacement mechanism. The nucleophile active site attacks the C1' of nucleotide 34 to detach the guanine base from the RNA, forming a covalent enzyme-RNA intermediate. The proton acceptor active site deprotonates the incoming PreQ1, allowing a nucleophilic attack on the C1' of the ribose to form the product. After dissociation, two additional enzymatic reactions on the tRNA convert PreQ1 to queuine (Q), resulting in the hypermodified nucleoside queuosine (7-(((4,5-cis-dihydroxy-2-cyclopenten-1-yl)amino)methyl)-7-deazaguanosine). This Ralstonia nicotianae (strain ATCC BAA-1114 / GMI1000) (Ralstonia solanacearum) protein is Queuine tRNA-ribosyltransferase.